The primary structure comprises 320 residues: Glycerol-3-phosphate dehydrogenase [NAD(P)+] (320 aa).

3 residues coordinate NADPH: Phe11, Arg30, and Lys102. Sn-glycerol 3-phosphate contacts are provided by Lys102, Gly130, and Ser132. Ala134 contacts NADPH. Positions 185, 238, 248, 249, and 250 each coordinate sn-glycerol 3-phosphate. The Proton acceptor role is filled by Lys185. Arg249 contacts NADPH. Glu270 is an NADPH binding site.

It belongs to the NAD-dependent glycerol-3-phosphate dehydrogenase family.

The protein localises to the cytoplasm. The enzyme catalyses sn-glycerol 3-phosphate + NAD(+) = dihydroxyacetone phosphate + NADH + H(+). It catalyses the reaction sn-glycerol 3-phosphate + NADP(+) = dihydroxyacetone phosphate + NADPH + H(+). The protein operates within membrane lipid metabolism; glycerophospholipid metabolism. Its function is as follows. Catalyzes the reduction of the glycolytic intermediate dihydroxyacetone phosphate (DHAP) to sn-glycerol 3-phosphate (G3P), the key precursor for phospholipid synthesis. The chain is Glycerol-3-phosphate dehydrogenase [NAD(P)+] from Roseobacter denitrificans (strain ATCC 33942 / OCh 114) (Erythrobacter sp. (strain OCh 114)).